Here is a 587-residue protein sequence, read N- to C-terminus: Protein NDNF (587 aa).

The signal sequence occupies residues 1-24; that stretch reads MQRSTMLPGVELLLLFLLSTSLHA. Residues N109, N129, N190, N321, N334, N459, N498, and N558 are each glycosylated (N-linked (GlcNAc...) asparagine).

Binds heparin. Interacts with dally; the interaction promotes dally degradation. Interacts with dpp and gbb.

The protein resides in the secreted. The protein localises to the extracellular space. Its subcellular location is the extracellular matrix. Functionally, secretory protein that acts as a feedback regulator of dpp/BMP, wg and hh signaling pathways. In the developing wing, is a dosage-dependent modulator of dpp/BMP signaling involved in wing growth and crossvein patterning; low levels promote and high levels inhibit dpp/BMP signaling. In the early pupal wing, inhibits dpp/BMP signaling activity to prevent the formation of ectopic crossveins in the posterior compartment. Binds to dpp and gbb to modulate their release and activity decreasing dpp/BMP signaling in the responding cells. During wing development regulates dpp/BMP coreceptor dally availability on the cell surface. Might have a role in testis development. The chain is Protein NDNF from Drosophila melanogaster (Fruit fly).